Reading from the N-terminus, the 222-residue chain is Large ribosomal subunit protein bL20 (222 aa).

Belongs to the bacterial ribosomal protein bL20 family.

Binds directly to 23S ribosomal RNA and is necessary for the in vitro assembly process of the 50S ribosomal subunit. It is not involved in the protein synthesizing functions of that subunit. The polypeptide is Large ribosomal subunit protein bL20 (rplT) (Paenarthrobacter aurescens (strain TC1)).